The chain runs to 536 residues: Phosphoenolpyruvate carboxykinase (ATP) (536 aa).

Substrate contacts are provided by Arg-61, Tyr-195, and Lys-201. Residues Lys-201, His-220, and 236-244 (GLSGTGKTT) contribute to the ATP site. Mn(2+) contacts are provided by Lys-201 and His-220. Asp-257 contacts Mn(2+). The ATP site is built by Glu-285, Arg-322, and Thr-447. Residue Arg-322 participates in substrate binding.

This sequence belongs to the phosphoenolpyruvate carboxykinase (ATP) family. Mn(2+) serves as cofactor.

It is found in the cytoplasm. The enzyme catalyses oxaloacetate + ATP = phosphoenolpyruvate + ADP + CO2. Its pathway is carbohydrate biosynthesis; gluconeogenesis. Functionally, involved in the gluconeogenesis. Catalyzes the conversion of oxaloacetate (OAA) to phosphoenolpyruvate (PEP) through direct phosphoryl transfer between the nucleoside triphosphate and OAA. The sequence is that of Phosphoenolpyruvate carboxykinase (ATP) from Rhizobium meliloti (strain 1021) (Ensifer meliloti).